The primary structure comprises 514 residues: MAGLYSSSSSSKPTLSSSPSSSSSSRLFLLVTLLPLSLACFAFVLQWRGGLDDPVTHWSIDHHEFPGMVTTQEKRSLRRSVSDSGCVDLLGQSRSPSFPYFRNWKFDYHSDLKPRICITTSTSAGLEQTLPWIYFHKVIGVSTFYLFVEGKAASPNVSRVLETIPGVKVIYRTKELEEKQAKSRIWNETWLSSFFYKPCNYELFVKQSLNMEMAITMAQDAGMEWIIHLDTDELIHPSGTHEYSLRKLLGNISADVDVVIFPNYESSVERDDIREPFSEVSMFKKNFDHLLRDVYFGNYKDATRGNPNYFLTYGNGKAAARVQDHLRPNGAHRWHNYRKSPNEVKLEEAAVLHYTYPRFSDLTSRRDRCGCKPTKVDVKRCFMLEFDRAAFIIASTASSEEMLQWYREHVVWTDEKLKLKLLRKGILTRIYAPMVIIQELREAGVFSSVVIAAHKSPSKNSSTADSTSGITRESSQETGKRRVLEFHLDVDGESQASAVPPQSPPGLEATQMEL.

The interval 1–23 is disordered; the sequence is MAGLYSSSSSSKPTLSSSPSSSS. The N-terminal stretch at 1-39 is a signal peptide; that stretch reads MAGLYSSSSSSKPTLSSSPSSSSSSRLFLLVTLLPLSLA. N-linked (GlcNAc...) asparagine glycans are attached at residues Asn156, Asn187, Asn251, and Asn460. The interval 457–514 is disordered; sequence PSKNSSTADSTSGITRESSQETGKRRVLEFHLDVDGESQASAVPPQSPPGLEATQMEL. Residues 458–473 are compositionally biased toward polar residues; sequence SKNSSTADSTSGITRE. A compositionally biased stretch (basic and acidic residues) spans 474–490; sequence SSQETGKRRVLEFHLDV.

It belongs to the glycosyltransferase 25 family.

It localises to the secreted. The protein localises to the cell wall. Its subcellular location is the cytoplasm. It is found in the cell membrane. Its function is as follows. Involved in the coordination between cell elongation and cellulose synthesis by promoting the expression of genes involved in cell elongation and cellulose synthesis. Acts as a regulator of plasmodesmatal permeability. Maybe a glycosyltransferase. In Arabidopsis thaliana (Mouse-ear cress), this protein is Glycosyltransferase-like At3g57200.